We begin with the raw amino-acid sequence, 425 residues long: Xylose isomerase (425 aa).

Catalysis depends on residues His101 and Asp104. Mg(2+) is bound by residues Glu232, Glu268, His271, Asp296, Asp307, Asp309, and Asp339.

Belongs to the xylose isomerase family. Homotetramer. Requires Mg(2+) as cofactor.

The protein localises to the cytoplasm. It carries out the reaction alpha-D-xylose = alpha-D-xylulofuranose. In Salmonella paratyphi A (strain ATCC 9150 / SARB42), this protein is Xylose isomerase.